A 538-amino-acid polypeptide reads, in one-letter code: Serine/threonine-protein phosphatase 5 (538 aa).

TPR repeat units lie at residues 13–46 (AEEF…NSNN), 48–80 (VYWA…DSRY), and 81–114 (SKGY…SPND). The next 2 membrane-spanning stretches (helical) occupy residues 163–183 (SSMP…VVAV) and 185–205 (GFAT…TFWW). Mn(2+) is bound by residues aspartate 282, histidine 284, aspartate 311, and asparagine 343. Histidine 344 acts as the Proton donor in catalysis. Histidine 392 and histidine 467 together coordinate Mn(2+).

The protein belongs to the PPP phosphatase family. PP-5 (PP-T) subfamily. In terms of assembly, interacts with PHYA and PHYB, mostly when they are phosphorylated and in Pfr forms. Mn(2+) is required as a cofactor.

The protein localises to the endoplasmic reticulum membrane. The protein resides in the nucleus membrane. It is found in the cytoplasm. Its subcellular location is the nucleus. It localises to the nucleoplasm. The protein localises to the nucleus speckle. It catalyses the reaction O-phospho-L-seryl-[protein] + H2O = L-seryl-[protein] + phosphate. The catalysed reaction is O-phospho-L-threonyl-[protein] + H2O = L-threonyl-[protein] + phosphate. With respect to regulation, activated by arachidonic acid (AA). Functionally, isoform 2 dephosphorylates phosphorylated phytochromes, with a preference toward Pfr forms, and enhances phytochrome-mediated photoresponses, probably by enhancing their stability and their binding affinity for light signal transducers such as NDPK2. Can use para-nitrophenylphosphate (pNPP) as substrate. The protein is Serine/threonine-protein phosphatase 5 (PAPP5) of Arabidopsis thaliana (Mouse-ear cress).